We begin with the raw amino-acid sequence, 393 residues long: GDNF family receptor alpha-like (393 aa).

Positions 1 to 19 are cleaved as a signal peptide; the sequence is MLVFIFLAVTLSSENESSS. Residues 20-349 lie on the Extracellular side of the membrane; the sequence is QTNDCAHLIQ…LTGFNSFFNG (330 aa). N-linked (GlcNAc...) asparagine glycans are attached at residues asparagine 59, asparagine 65, asparagine 101, and asparagine 115. Disulfide bonds link cysteine 131–cysteine 189, cysteine 138–cysteine 144, cysteine 155–cysteine 167, cysteine 162–cysteine 210, cysteine 191–cysteine 198, cysteine 220–cysteine 291, cysteine 227–cysteine 233, cysteine 244–cysteine 275, cysteine 252–cysteine 258, cysteine 269–cysteine 316, and cysteine 293–cysteine 304. The tract at residues 149 to 228 is required for interaction with GDF15; the sequence is ALYLKACSAN…TCLSVIHTCR (80 aa). A helical membrane pass occupies residues 350–370; it reads ELLYVVVCMAVTCGILFLVML. The Cytoplasmic portion of the chain corresponds to 371–393; it reads KLRIQSEKRDPSSIEIAGGVIIQ.

It belongs to the GDNFR family. Interacts (via the extracellular domain) with GDF15 and RET; receptor of GDF15, mediates cellular signaling through interaction with RET after GDF15-binding. Interaction with RET requires previous GDF15-binding. Cleaved and inactivated by MMP14, inhibiting the GDF15-GFRAL aversive response. Expressed in the brainstem, restricted to cells in the area postrema and the immediately adjacent region of the nucleus tractus solitarius.

Its subcellular location is the cell membrane. With respect to regulation, specifically inhibited by 3P10 monoclonal antibody. Strongly activated by LY3463251, a long-acting and stable agonist composed of GDF15 conjugated monomeric human IgG4 Fc. Brainstem-restricted receptor for GDF15 hormone, which triggers an aversive response, characterized by nausea, vomiting, and/or loss of appetite in response to various stresses. The aversive response is both required to reduce continuing exposure to those stresses at the time of exposure and to promote avoidance behavior in the future. The GDF15-GFRAL aversive response is triggered by stresses, such as anticancer drugs (camptothecin or cisplatin), cancers or drugs such as metformin. Upon interaction with its ligand, GDF15, mediates the GDF15-induced autophosphorylation and activation of the RET tyrosine kinase receptor, leading to activation of MAPK- and AKT- signaling pathways. Ligand-binding activates GFRAL-expressing neurons localized in the area postrema and nucleus tractus solitarius of the brainstem. The GDF15-GFRAL signal induces expression of genes involved in metabolism, such as lipid metabolism in adipose tissues. The protein is GDNF family receptor alpha-like (Gfral) of Mus musculus (Mouse).